A 256-amino-acid polypeptide reads, in one-letter code: Protein FixA (256 aa).

This sequence belongs to the ETF beta-subunit/FixA family. As to quaternary structure, heterodimer of FixA and FixB.

The protein operates within amine and polyamine metabolism; carnitine metabolism. In terms of biological role, required for anaerobic carnitine reduction. May bring reductant to CaiA. The protein is Protein FixA of Salmonella paratyphi A (strain ATCC 9150 / SARB42).